Here is a 488-residue protein sequence, read N- to C-terminus: Glutamyl-tRNA(Gln) amidotransferase subunit A (488 aa).

Active-site charge relay system residues include K77 and S152. The active-site Acyl-ester intermediate is the S176.

This sequence belongs to the amidase family. GatA subfamily. Heterotrimer of A, B and C subunits.

The enzyme catalyses L-glutamyl-tRNA(Gln) + L-glutamine + ATP + H2O = L-glutaminyl-tRNA(Gln) + L-glutamate + ADP + phosphate + H(+). Functionally, allows the formation of correctly charged Gln-tRNA(Gln) through the transamidation of misacylated Glu-tRNA(Gln) in organisms which lack glutaminyl-tRNA synthetase. The reaction takes place in the presence of glutamine and ATP through an activated gamma-phospho-Glu-tRNA(Gln). This Streptococcus equi subsp. zooepidemicus (strain MGCS10565) protein is Glutamyl-tRNA(Gln) amidotransferase subunit A.